We begin with the raw amino-acid sequence, 605 residues long: Replication protein E1 (605 aa).

Residues 80 to 82 (KRK) carry the Nuclear localization signal motif. Phosphoserine; by host occurs at positions 85 and 93. Residues 92–101 (LSPQLESISL) carry the Nuclear export signal motif. The segment at 145 to 308 (QGTKGLGIVK…TLINHQSANA (164 aa)) is DNA-binding region. The SF3 helicase domain occupies 407–557 (INFIEFLTVF…FPLDANHKPQ (151 aa)). Residue 433-440 (GPPDTGKS) participates in ATP binding. Residue Lys514 forms a Glycyl lysine isopeptide (Lys-Gly) (interchain with G-Cter in SUMO) linkage.

It belongs to the papillomaviridae E1 protein family. Can form hexamers. Interacts with E2 protein; this interaction increases E1 DNA binding specificity. Interacts with host DNA polymerase subunit POLA2. Interacts with host single stranded DNA-binding protein RPA1. Interacts with host TOP1; this interaction stimulates the enzymatic activity of TOP1. Post-translationally, phosphorylated. Sumoylated.

It is found in the host nucleus. The enzyme catalyses Couples ATP hydrolysis with the unwinding of duplex DNA by translocating in the 3'-5' direction.. It carries out the reaction ATP + H2O = ADP + phosphate + H(+). Functionally, ATP-dependent DNA 3'-5' helicase required for initiation of viral DNA replication. It forms a complex with the viral E2 protein. The E1-E2 complex binds to the replication origin which contains binding sites for both proteins. During the initial step, a dimer of E1 interacts with a dimer of protein E2 leading to a complex that binds the viral origin of replication with high specificity. Then, a second dimer of E1 displaces the E2 dimer in an ATP-dependent manner to form the E1 tetramer. Following this, two E1 monomers are added to each half of the site, which results in the formation of two E1 trimers on the viral ori. Subsequently, two hexamers will be created. The double hexamer acts as a bi-directional helicase machinery and unwinds the viral DNA and then recruits the host DNA polymerase to start replication. This chain is Replication protein E1, found in Homo sapiens (Human).